We begin with the raw amino-acid sequence, 549 residues long: Zinc finger protein 382 (549 aa).

Residues 1–105 (MNCHSVPLQG…DKPPTSIVII (105 aa)) are mediates interaction with TRIM28. 2 represses transcription regions span residues 10 to 51 (GPVS…FISV) and 75 to 210 (MFPS…PEQR). In terms of domain architecture, KRAB spans 12–83 (VSFKDVTVDF…RMFPSQSYLE (72 aa)). 10 consecutive C2H2-type zinc fingers follow at residues 211–233 (FECDECDSSFLMTEVAFPHDRAH), 295–317 (FQCPYCGNSFRRKSYLIEHQRIH), 323–345 (YICSQCGKAFRQKTALTLHEKTH), 351–373 (YLCVDCGKSFRQKATLTRHHKTH), 379–401 (YECTQCGSAFGKKSYLIDHQRTH), 407–429 (YQCAECGKAFIQKTTLTVHQRTH), 435–457 (YMCSECGKSFCQKTTLTLHQRIH), 463–485 (YVCSDCGKSFRQKAILTVHYRIH), 491–513 (NGCPQCGKAFSRKSNLIRHQKTH), and 519–541 (YECHECGKFFSCKSNLVAHQKTH). The tract at residues 295–549 (FQCPYCGNSF…THKAETVRFQ (255 aa)) is required for transcriptional repression activity; probably mediates sequence-specific DNA-binding.

This sequence belongs to the krueppel C2H2-type zinc-finger protein family. Interacts with TRIM28; enhances the transcriptional repressor activity. In terms of tissue distribution, ubiquitously expressed with higher expression in lung, kidney and testis.

It is found in the nucleus. Functions as a sequence-specific transcriptional repressor. The protein is Zinc finger protein 382 (Znf382) of Rattus norvegicus (Rat).